We begin with the raw amino-acid sequence, 1829 residues long: Sodium channel protein type 4 subunit alpha A (1829 aa).

At 1–124 (MARLLPPTGT…RGAIKILIHS (124 aa)) the chain is on the cytoplasmic side. The tract at residues 32–52 (STREELEGAEEEPQAPSSDLE) is disordered. Residues 106-421 (CISPFSIVRR…VVAMAYDEQN (316 aa)) form an I repeat. The helical transmembrane segment at 125-143 (LFSMFIMITILSNCVFMTM) threads the bilayer. At 144–150 (SNPPAWS) the chain is on the extracellular side. Residues 151–171 (KTVEYVFTGIYTFEATVKVLS) traverse the membrane as a helical segment. The Cytoplasmic segment spans residues 172 to 185 (RGFCIGPFTFLRDP). The helical transmembrane segment at 186–203 (WNWLDFMVISMAYVTEFV) threads the bilayer. The Extracellular portion of the chain corresponds to 204-209 (DLGNVS). Asn207 carries an N-linked (GlcNAc...) asparagine glycan. A helical transmembrane segment spans residues 210–226 (ALRTFRVLRALKTITVI). Residues 227 to 245 (PGLKTIVGALIQSVKKMID) lie on the Cytoplasmic side of the membrane. Residues 246–265 (VMILTIFALAVFALIGLQLF) traverse the membrane as a helical segment. The Extracellular portion of the chain corresponds to 266–358 (MGNLRQKCIR…PNYGYTSYDN (93 aa)). Cys273 and Cys327 are joined by a disulfide. 3 N-linked (GlcNAc...) asparagine glycosylation sites follow: Asn280, Asn293, and Asn329. A disulfide bond links Cys336 and Cys342. The pore-forming intramembrane region spans 359–383 (FGWAFLALFRLMTQDFWENLFQLTL). Topologically, residues 384–390 (RAAGKTY) are extracellular. A helical membrane pass occupies residues 391-411 (MIFFVVVIFLGSFYLINLILA). Residues 412 to 582 (VVAMAYDEQN…KWVHFVVMDP (171 aa)) lie on the Cytoplasmic side of the membrane. Residues 446 to 467 (ETGSKASLASQKTQSRGSNRTG) are compositionally biased toward polar residues. Residues 446–468 (ETGSKASLASQKTQSRGSNRTGS) form a disordered region. The stretch at 564 to 836 (CCAPWILFKK…QIAIGRITRG (273 aa)) is one II repeat. The chain crosses the membrane as a helical span at residues 583-601 (FVDLGITICIVLNTLFMAM). At 602 to 612 (EHYPMSPHFEH) the chain is on the extracellular side. A helical membrane pass occupies residues 613 to 632 (VLSVGNLVFTGIFTAEMVFK). The Cytoplasmic segment spans residues 633 to 646 (LIAMDPYYYFQVGW). Residues 647-666 (NIFDSIIVTLSLVELGLANV) traverse the membrane as a helical segment. Over 667–668 (QG) the chain is Extracellular. The helical transmembrane segment at 669–686 (LSVLRSFRLLRVFKLAKS) threads the bilayer. The Cytoplasmic portion of the chain corresponds to 687–702 (WPTLNMLIKIIGNSVG). Residues 703–721 (ALGNLTLVLAIIVFIFAVV) traverse the membrane as a helical segment. Residues 722-750 (GMQLFGKSYKDCVCKISEDCELPRWHMND) lie on the Extracellular side of the membrane. Cys735 and Cys741 are oxidised to a cystine. Residues 751–771 (FFHSFLIVFRILCGEWIETMW) constitute an intramembrane region (pore-forming). The Extracellular segment spans residues 772–782 (DCMEVAGASMC). Residues Cys773 and Cys782 are joined by a disulfide bond. The chain crosses the membrane as a helical span at residues 783–801 (LIVFMMVMVIGNLVVLNLF). Residues 802–998 (LALLLSSFSG…TCFTIVEHDY (197 aa)) are Cytoplasmic-facing. Positions 901-957 (SDVEEDEDSESSDEEDAKATLNDGDSSVCSTVDYQPPEPEPEPEEVEEEEPEPEEPE) are disordered. The span at 902 to 916 (DVEEDEDSESSDEED) shows a compositional bias: acidic residues. Residues 923 to 933 (DGDSSVCSTVD) are compositionally biased toward polar residues. The segment covering 939 to 957 (PEPEPEEVEEEEPEPEEPE) has biased composition (acidic residues). Residues 979-1292 (WGKKWWNLRR…KKYYNAMKKL (314 aa)) form an III repeat. A helical transmembrane segment spans residues 999-1016 (FETFIIFMILLSSGALAF). The Extracellular segment spans residues 1017–1029 (EDINIERRRVIKT). A helical membrane pass occupies residues 1030–1048 (ILEYADKVFTYIFIVEMLL). Topologically, residues 1049 to 1062 (KWVAYGFKTYFTNA) are cytoplasmic. A helical transmembrane segment spans residues 1063–1081 (WCWLDFLIVDVSLVSLTAN). At 1082–1089 (LMGYSELG) the chain is on the extracellular side. A helical transmembrane segment spans residues 1090–1108 (AIKSLRTLRALRPLRALSR). Over 1109-1125 (FEGMRVVVNALVGAIPS) the chain is Cytoplasmic. The helical transmembrane segment at 1126–1145 (IFNVLLVCLIFWLIFSIMGV) threads the bilayer. Residues 1146–1196 (NLFAGKFYHCINTTTEERIPMDVVNNKSDCMALMYTNEVRWVNVKVNYDNV) are Extracellular-facing. Cys1155 and Cys1175 are joined by a disulfide. N-linked (GlcNAc...) asparagine glycans are attached at residues Asn1157 and Asn1171. Positions 1197-1218 (GLGYLSLLQIATFKGWMDIMYA) form an intramembrane region, pore-forming. The Extracellular segment spans residues 1219–1235 (AVDSREVDEQPSYEINL). Residues 1236–1257 (YMYLYFVIFIIFGSFFTLNLFI) form a helical membrane-spanning segment. The Cytoplasmic segment spans residues 1258–1320 (GVIIDNFNQQ…LVFDFISKQF (63 aa)). Residues 1276–1278 (IFM) are important for rapid channel inactivation. The stretch at 1301 to 1599 (IPRPSNIIQG…WEKFDVDATQ (299 aa)) is one IV repeat. The helical transmembrane segment at 1321–1338 (FDIFIMVLICLNMVTMMI) threads the bilayer. Residues 1339–1349 (ETDDQSAEKEY) lie on the Extracellular side of the membrane. Residues 1350–1368 (VLYQINLVFIVVFTSECVL) form a helical membrane-spanning segment. Topologically, residues 1369–1380 (KLFALRQYFFTI) are cytoplasmic. Residues 1381–1398 (GWNVFDFVVVILSIAGLM) traverse the membrane as a helical segment. The Extracellular segment spans residues 1399–1411 (LSDIIEKYFVSPT). A helical membrane pass occupies residues 1412 to 1428 (LFRVIRLARIGRVLRLI). The Cytoplasmic segment spans residues 1429–1447 (RGAKGIRTLLFALMMSLPA). A helical membrane pass occupies residues 1448–1465 (LFNIGLLLFLIMFIFSIF). The Extracellular portion of the chain corresponds to 1466-1487 (GMSNFAYVKKQAGIDDIFNFET). Residues 1488–1510 (FGGSIICLFEITTSAGWDGLLLP) constitute an intramembrane region (pore-forming). Topologically, residues 1511–1540 (ILNSGPPDCDPDFENPGTDVRGNCGNPGMG) are extracellular. A disulfide bridge connects residues Cys1519 and Cys1534. A helical transmembrane segment spans residues 1541–1563 (IMFFCSYIIMSFLVVVNMYIAII). Residues 1564–1829 (LENFNNAQEE…NATTIKESIV (266 aa)) lie on the Cytoplasmic side of the membrane. The IQ domain maps to 1693 to 1722 (EERAAIAVQRIYRRHLLKRAIRYACFMRRS). The segment at 1765–1786 (PMRPNSQPPKPSQVTQTRASVT) is disordered.

This sequence belongs to the sodium channel (TC 1.A.1.10) family. Nav1.4/SCN4A subfamily. Voltage-gated sodium (Nav) channels consist of an ion-conducting alpha subunit which is functional on its own associated with regulatory beta subunits. Expressed in skeletal muscle, brain, spinal cord, and eye.

It is found in the cell membrane. The enzyme catalyses Na(+)(in) = Na(+)(out). Functionally, pore-forming subunit of a voltage-gated sodium (Nav) channel that directly mediates the depolarizing phase of action potentials in excitable membranes. Navs, also called VGSCs (voltage-gated sodium channels) or VDSCs (voltage-dependent sodium channels), operate by switching between closed and open conformations depending on the voltage difference across the membrane. In the open conformation they allow Na(+) ions to selectively pass through the pore, along their electrochemical gradient. The influx of Na+ ions provokes membrane depolarization, initiating the propagation of electrical signals throughout cells and tissues. The sequence is that of Sodium channel protein type 4 subunit alpha A (scn4aa) from Danio rerio (Zebrafish).